The primary structure comprises 1234 residues: DNA-directed RNA polymerase subunit beta (1234 aa).

It belongs to the RNA polymerase beta chain family. In terms of assembly, the RNAP catalytic core consists of 2 alpha, 1 beta, 1 beta' and 1 omega subunit. When a sigma factor is associated with the core the holoenzyme is formed, which can initiate transcription.

The catalysed reaction is RNA(n) + a ribonucleoside 5'-triphosphate = RNA(n+1) + diphosphate. In terms of biological role, DNA-dependent RNA polymerase catalyzes the transcription of DNA into RNA using the four ribonucleoside triphosphates as substrates. The sequence is that of DNA-directed RNA polymerase subunit beta from Clostridium perfringens (strain ATCC 13124 / DSM 756 / JCM 1290 / NCIMB 6125 / NCTC 8237 / Type A).